A 59-amino-acid polypeptide reads, in one-letter code: Large ribosomal subunit protein bL32 (59 aa).

Residues 1–20 are disordered; sequence MAVQQNKKSKSKKGMRRSHD. Over residues 7–19 the composition is skewed to basic residues; it reads KKSKSKKGMRRSH.

Belongs to the bacterial ribosomal protein bL32 family.

The protein is Large ribosomal subunit protein bL32 of Nitratidesulfovibrio vulgaris (strain DSM 19637 / Miyazaki F) (Desulfovibrio vulgaris).